Consider the following 825-residue polypeptide: Extracellular exo-alpha-L-arabinofuranosidase (825 aa).

An N-terminal signal peptide occupies residues 1–29; it reads MSRIRWRYGTAATALLVAAGLVPTATAHA. E58 provides a ligand contact to alpha-L-arabinofuranose. The 146-residue stretch at 70–215 folds into the CBM-cenC domain; the sequence is AELVQNRSFE…ALDMVSLFPR (146 aa). Residues C247 and 379-380 contribute to the alpha-L-arabinofuranose site; that span reads NE. E380 (proton donor/acceptor) is an active-site residue.

This sequence belongs to the glycosyl hydrolase 51 family.

Its subcellular location is the secreted. The catalysed reaction is Hydrolysis of terminal non-reducing alpha-L-arabinofuranoside residues in alpha-L-arabinosides.. Functionally, involved in the degradation of arabinan and is a key enzyme in the complete degradation of the plant cell wall. Catalyzes the cleavage of terminal alpha-L-arabinofuranosyl residues of arabinan present in the arabinofuranosyl polysaccharides or oligosaccharides. It cannot act on other arabinose-containing polysaccharides and arabinoxylo-oligosaccharides. It leaves most of the polymer intact, including most of the main-chain residues and the arabinose side chains. It acts preferentially on the linear alpha-(1-&gt;2)-linked arabinofuranobiosides and alpha-(1-&gt;3)-linked arabinofuranobiosides, and is much less effective on alpha-(1-&gt;5)-linked arabinofuranobiosides. It also hydrolyzes the terminal alpha-(1-&gt;3)-linked arabinofuranotriosides in preference to the alpha-(1-&gt;5)-linked arabinofuranotriosides. The chain is Extracellular exo-alpha-L-arabinofuranosidase from Streptomyces chartreusis.